We begin with the raw amino-acid sequence, 419 residues long: MQKLIIHGGKPLKGNINISGAKNAVLPIMAASILTDKLHITNVPKLTDVSTMKDLLRSHGACIEIIEHTDEFELIINTGNINNFTADYEIVRKMRASIWVLGPLLTKYGKAKVSLPGGCAIGARQVDLHIAVLKAMGATIEIEDGYINASSKGRLKGTHFVFDKVSVGATINAILAAVLAEGETVLFNCALEPEIVDLCNCLIKMGADIAGVGTSEITIKGKDSLNKMSYKVLSDRIEAGTYMFAAAITKGDVKICGIDYHIIENIALKLIETGIKVAPINNGVQVTYEGTLNSVDLETNPYPGFATDLQAQFMSLMTLSSGVSMITENIFENRFMHVPELCRMGADIVVRGNKAVVRGVEMLKGAEVMASDLRASVSLILAGLSTNSKTVLHRIYHLDRGFQDLEKKLSNCGADIKRV.

22–23 (KN) serves as a coordination point for phosphoenolpyruvate. Residue R95 participates in UDP-N-acetyl-alpha-D-glucosamine binding. The active-site Proton donor is the C119. 2-(S-cysteinyl)pyruvic acid O-phosphothioketal is present on C119. Residues 164–167 (KVSV), D308, and I330 each bind UDP-N-acetyl-alpha-D-glucosamine.

This sequence belongs to the EPSP synthase family. MurA subfamily.

It localises to the cytoplasm. It carries out the reaction phosphoenolpyruvate + UDP-N-acetyl-alpha-D-glucosamine = UDP-N-acetyl-3-O-(1-carboxyvinyl)-alpha-D-glucosamine + phosphate. It participates in cell wall biogenesis; peptidoglycan biosynthesis. Its function is as follows. Cell wall formation. Adds enolpyruvyl to UDP-N-acetylglucosamine. The protein is UDP-N-acetylglucosamine 1-carboxyvinyltransferase of Rickettsia akari (strain Hartford).